A 185-amino-acid chain; its full sequence is Elongation factor P (185 aa).

It belongs to the elongation factor P family.

It localises to the cytoplasm. Its pathway is protein biosynthesis; polypeptide chain elongation. Functionally, involved in peptide bond synthesis. Stimulates efficient translation and peptide-bond synthesis on native or reconstituted 70S ribosomes in vitro. Probably functions indirectly by altering the affinity of the ribosome for aminoacyl-tRNA, thus increasing their reactivity as acceptors for peptidyl transferase. This chain is Elongation factor P, found in Syntrophomonas wolfei subsp. wolfei (strain DSM 2245B / Goettingen).